A 231-amino-acid polypeptide reads, in one-letter code: TATA-box-binding protein (231 aa).

2 consecutive repeat copies span residues 58–134 (LQNI…ARII) and 148–225 (IQNI…YPVL).

Belongs to the TBP family. Belongs to the TFIID complex together with the TBP-associated factors (TAFs). Binds DNA as monomer.

The protein localises to the nucleus. In terms of biological role, general transcription factor that functions at the core of the DNA-binding multiprotein factor TFIID. Binding of TFIID to the TATA box is the initial transcriptional step of the pre-initiation complex (PIC), playing a role in the activation of eukaryotic genes transcribed by RNA polymerase II. This Schizosaccharomyces pombe (strain 972 / ATCC 24843) (Fission yeast) protein is TATA-box-binding protein (tbp1).